Reading from the N-terminus, the 741-residue chain is MEQTYQYAWIIPFLPLPVPMLIGLGLLLFPTATKSLRRMWAFQSVLLLSIVMIFSMNLSIQQINSSSVYQYVWSWIINNDFSLEFGYLIDPLTSIMSILITTVGIMVLIYSDNYMSHDHGYLRFFAYMSFFSTSMLGLVTSSNLIQIYIFWELVGMCSYLLIGFWFTRPVAAKACQKAFVTNRVGDFGLLLGILGFYWITGSFEFRDLFQIFNNLISNNEVNFLFVTLCAVLLFAGAIAKSAQFPLHVWLPDAMEGPTPISALIHAATMVAAGIFLVARLMPLFIVIPHIMNFISLIGIITVFLGATLALAQKDIKRGLAYSTMSQLGYMMLALGMGSYRSALFHLITHAYSKALLFLGSGSVIHSMETLVGYCPKKSQNMVLMGGLTKHVPITKNSFLLGTLSLCGIPPLACFWSKDEILNDSWLYSPIFAIIAWSTAGLTAFYMCRIYLLTFEGHLNVHFQNYSGKRNTPLYSISLWGKEGSKISNKNFRLVTLLKMKKNGRPSFFSNKVYKMDENVRNLIQPFLSIPNFGNTKTSLYPYESDNTMLFPILILILFTLFVGFLGIPFNQDVDILSKWLTPSINLLHKNSNNSIDWYEFCKDAVFSVSIASFGIFIAFFLYKPVYSSFQNLDLINSFVKIGPKRIFSDKIKKAIYDWSYNRGYIDAFDGTFLTVGMRKLAEFTHFFDRRIIDGIPNGVGLMSFFVAEVIKSVGGGRISSYLFFYFSYVSIFLLIYYFLNY.

The next 16 membrane-spanning stretches (helical) occupy residues 9–29 (WIIP…LLLF), 40–60 (WAFQ…NLSI), 89–109 (IDPL…MVLI), 125–145 (FAYM…SNLI), 147–167 (IYIF…FWFT), 185–205 (GDFG…SFEF), 219–239 (NEVN…GAIA), 258–278 (TPIS…FLVA), 283–303 (LFIV…ITVF), 327–347 (LGYM…FHLI), 354–374 (ALLF…VGYC), 396–416 (NSFL…CFWS), 425–445 (WLYS…TAFY), 549–569 (LFPI…GIPF), 605–625 (VFSV…YKPV), and 718–738 (ISSY…IYYF).

This sequence belongs to the complex I subunit 5 family. NDH is composed of at least 16 different subunits, 5 of which are encoded in the nucleus.

It localises to the plastid. It is found in the chloroplast thylakoid membrane. It catalyses the reaction a plastoquinone + NADH + (n+1) H(+)(in) = a plastoquinol + NAD(+) + n H(+)(out). It carries out the reaction a plastoquinone + NADPH + (n+1) H(+)(in) = a plastoquinol + NADP(+) + n H(+)(out). In terms of biological role, NDH shuttles electrons from NAD(P)H:plastoquinone, via FMN and iron-sulfur (Fe-S) centers, to quinones in the photosynthetic chain and possibly in a chloroplast respiratory chain. The immediate electron acceptor for the enzyme in this species is believed to be plastoquinone. Couples the redox reaction to proton translocation, and thus conserves the redox energy in a proton gradient. In Athroisma gracile, this protein is NAD(P)H-quinone oxidoreductase subunit 5, chloroplastic (ndhF).